Here is a 283-residue protein sequence, read N- to C-terminus: Apidaecins type 73 (283 aa).

Positions 1–18 (KNFALAILVVTFVVAVFG) are cleaved as a signal peptide. 9 consecutive propeptides follow at residues 19-41 (NTNL…EAEP), 62-69 (EAEPEAEP), 90-97 (EAELEAEP), 118-125 (EAEPEAEP), 146-153 (EAELEAEP), 174-181 (EAEPEAEP), 202-209 (EAEPEAEP), 230-237 (EAEPEAEP), and 258-265 (EAKPEAKP). Residues 19-283 (NTNLDPPTRP…PQPRPPHPRI (265 aa)) form a disordered region. Pro residues predominate over residues 273 to 283 (IPQPRPPHPRI).

This sequence belongs to the apidaecin family.

Its subcellular location is the secreted. Apidaecins have bactericidal activity; predominantly against Gram-negative bacteria. They seem to interfere with cell propagation. This is Apidaecins type 73 (APID73) from Apis mellifera (Honeybee).